The sequence spans 56 residues: Large ribosomal subunit protein bL32 (56 aa).

The interval 1–21 is disordered; sequence MAVQKNKPTRSKRGMRRSHDA. A compositionally biased stretch (basic residues) spans 7 to 16; that stretch reads KPTRSKRGMR.

This sequence belongs to the bacterial ribosomal protein bL32 family.

The sequence is that of Large ribosomal subunit protein bL32 from Hamiltonella defensa subsp. Acyrthosiphon pisum (strain 5AT).